The following is a 138-amino-acid chain: Large ribosomal subunit protein bL19 (138 aa).

The protein belongs to the bacterial ribosomal protein bL19 family.

This protein is located at the 30S-50S ribosomal subunit interface and may play a role in the structure and function of the aminoacyl-tRNA binding site. The sequence is that of Large ribosomal subunit protein bL19 from Rickettsia akari (strain Hartford).